The chain runs to 101 residues: MTQESTMNDIYPLAALLIYATNQKVTKEKISSVFKFLGLESHPKICEFFEVDAVEIKKLLMSSTQEAAAPAGPQEPAEASGDAGKKEEVEEEEIEIDFGMF.

The span at 65–79 shows a compositional bias: low complexity; that stretch reads QEAAAPAGPQEPAEA. Positions 65 to 101 are disordered; it reads QEAAAPAGPQEPAEASGDAGKKEEVEEEEIEIDFGMF. Over residues 89-101 the composition is skewed to acidic residues; that stretch reads VEEEEIEIDFGMF.

This is an uncharacterized protein from Encephalitozoon cuniculi (strain GB-M1) (Microsporidian parasite).